The following is a 320-amino-acid chain: Homoserine kinase (320 aa).

Position 100–110 (100–110 (PLSSGMGSSAA)) interacts with ATP.

It belongs to the GHMP kinase family. Homoserine kinase subfamily.

Its subcellular location is the cytoplasm. The enzyme catalyses L-homoserine + ATP = O-phospho-L-homoserine + ADP + H(+). It participates in amino-acid biosynthesis; L-threonine biosynthesis; L-threonine from L-aspartate: step 4/5. Its function is as follows. Catalyzes the ATP-dependent phosphorylation of L-homoserine to L-homoserine phosphate. In Chlorobium phaeobacteroides (strain DSM 266 / SMG 266 / 2430), this protein is Homoserine kinase.